Consider the following 298-residue polypeptide: uncharacterized protein (298 aa).

Positions 2-229 constitute an ABC transporter domain; the sequence is LTIDHVTKTF…FGKKNVTIHS (228 aa). 34–41 contacts ATP; sequence GANGAGKT.

This sequence belongs to the ABC transporter superfamily.

Its subcellular location is the cell membrane. This is an uncharacterized protein from Bacillus subtilis (strain 168).